A 550-amino-acid chain; its full sequence is Dipeptide-binding protein (550 aa).

The first 22 residues, 1 to 22, serve as a signal peptide directing secretion; that stretch reads MKQAKIIGLSTVIALSGIILVA. Residue cysteine 23 is the site of N-palmitoyl cysteine attachment. The S-diacylglycerol cysteine moiety is linked to residue cysteine 23.

The protein belongs to the bacterial solute-binding protein 5 family. In terms of assembly, the complex is composed of two ATP-binding proteins (DppD and DppF), two transmembrane proteins (DppB and DppC) and a solute-binding protein (DppA).

The protein localises to the cell membrane. Functionally, part of the ABC transporter DppABCDF involved in dipeptide transport. Binds di- and tripeptides with high affinity. Requires a free N-terminal alpha-amino group and an alpha-peptide bound contiguous with the N-terminal amino group, has a strong selectivity for L-residues, and shows preference for dipeptides containing methionine or arginine, followed by hydrophobic tripeptides consisting of leucine or valine residues. This is Dipeptide-binding protein from Lactococcus lactis subsp. cremoris (strain MG1363).